A 173-amino-acid polypeptide reads, in one-letter code: MKRKEIIDDVTMKRAITRITYEIIERNKNLDNIVLAGIKTRGVFLAKRIQERLKQLENLDIPVGELDTKPFRDDMKVEVDTTTMPVDITDKDIILIDDVLYTGRTIRAAIDNLVSLGRPSRVSLAVLIDRGHRELPIRADYVGKNIPTSQFEEILVEVMEHDGYDRVSIIDPS.

The PRPP-binding signature appears at I93–T105.

This sequence belongs to the purine/pyrimidine phosphoribosyltransferase family. PyrR subfamily. Homodimer and homohexamer; in equilibrium.

It catalyses the reaction UMP + diphosphate = 5-phospho-alpha-D-ribose 1-diphosphate + uracil. Regulates transcriptional attenuation of the pyrimidine nucleotide (pyr) operon by binding in a uridine-dependent manner to specific sites on pyr mRNA. This disrupts an antiterminator hairpin in the RNA and favors formation of a downstream transcription terminator, leading to a reduced expression of downstream genes. Its function is as follows. Also displays a weak uracil phosphoribosyltransferase activity which is not physiologically significant. This chain is Bifunctional protein PyrR, found in Streptococcus agalactiae serotype Ia (strain ATCC 27591 / A909 / CDC SS700).